Here is a 117-residue protein sequence, read N- to C-terminus: Large ribosomal subunit protein bL20 (117 aa).

Belongs to the bacterial ribosomal protein bL20 family.

Its function is as follows. Binds directly to 23S ribosomal RNA and is necessary for the in vitro assembly process of the 50S ribosomal subunit. It is not involved in the protein synthesizing functions of that subunit. The sequence is that of Large ribosomal subunit protein bL20 from Actinobacillus succinogenes (strain ATCC 55618 / DSM 22257 / CCUG 43843 / 130Z).